A 485-amino-acid polypeptide reads, in one-letter code: Amidophosphoribosyltransferase, chloroplastic (485 aa).

Residues 1 to 18 (KTTNTFASVNDDEKPREE) constitute a chloroplast transit peptide. C19 serves as the catalytic Nucleophile. The region spanning 19–237 (CGVVGIYGDP…PGEVVVVDHT (219 aa)) is the Glutamine amidotransferase type-2 domain. A [4Fe-4S] cluster-binding site is contributed by C253. Mg(2+)-binding residues include S300, D362, and D363. 3 residues coordinate [4Fe-4S] cluster: C399, C450, and C453.

This sequence in the C-terminal section; belongs to the purine/pyrimidine phosphoribosyltransferase family. Mg(2+) is required as a cofactor. It depends on [4Fe-4S] cluster as a cofactor.

It is found in the plastid. The protein resides in the chloroplast. The enzyme catalyses 5-phospho-beta-D-ribosylamine + L-glutamate + diphosphate = 5-phospho-alpha-D-ribose 1-diphosphate + L-glutamine + H2O. Its pathway is purine metabolism; IMP biosynthesis via de novo pathway; N(1)-(5-phospho-D-ribosyl)glycinamide from 5-phospho-alpha-D-ribose 1-diphosphate: step 1/2. This Vigna aconitifolia (Moth bean) protein is Amidophosphoribosyltransferase, chloroplastic (PUR1).